The sequence spans 212 residues: Protein-L-isoaspartate O-methyltransferase (212 aa).

The active site involves Ser60.

The protein belongs to the methyltransferase superfamily. L-isoaspartyl/D-aspartyl protein methyltransferase family.

Its subcellular location is the cytoplasm. It catalyses the reaction [protein]-L-isoaspartate + S-adenosyl-L-methionine = [protein]-L-isoaspartate alpha-methyl ester + S-adenosyl-L-homocysteine. Functionally, catalyzes the methyl esterification of L-isoaspartyl residues in peptides and proteins that result from spontaneous decomposition of normal L-aspartyl and L-asparaginyl residues. It plays a role in the repair and/or degradation of damaged proteins. The polypeptide is Protein-L-isoaspartate O-methyltransferase (Methanococcus maripaludis (strain C6 / ATCC BAA-1332)).